A 260-amino-acid polypeptide reads, in one-letter code: Methylesterase 7 (260 aa).

Serine 84 functions as the Acyl-ester intermediate in the catalytic mechanism. Active-site charge relay system residues include aspartate 210 and histidine 238.

Belongs to the AB hydrolase superfamily. Methylesterase family.

The enzyme catalyses methyl (indol-3-yl)acetate + H2O = (indol-3-yl)acetate + methanol + H(+). It carries out the reaction methyl salicylate + H2O = salicylate + methanol + H(+). Its pathway is plant hormone biosynthesis. With respect to regulation, esterase activity is down-regulated by salicylic acid (SA). Functionally, methylesterase shown to have carboxylesterase activity, methyl indole-3-acetic acid (MeIAA) esterase activity and methyl salicylate (MeSA) esterase activity in vitro. Required to convert methyl salicylate (MeSA) to salicylic acid (SA) as part of the signal transduction pathways that activate systemic acquired resistance in systemic tissue. MeSA is believed to be an inactive form that needs to be demethylated to exert a biological effect. The chain is Methylesterase 7 from Arabidopsis thaliana (Mouse-ear cress).